A 159-amino-acid chain; its full sequence is ATP synthase subunit b (159 aa).

A helical transmembrane segment spans residues 8-28 (ILATIINFIILILILKHFFWD).

This sequence belongs to the ATPase B chain family. As to quaternary structure, F-type ATPases have 2 components, F(1) - the catalytic core - and F(0) - the membrane proton channel. F(1) has five subunits: alpha(3), beta(3), gamma(1), delta(1), epsilon(1). F(0) has three main subunits: a(1), b(2) and c(10-14). The alpha and beta chains form an alternating ring which encloses part of the gamma chain. F(1) is attached to F(0) by a central stalk formed by the gamma and epsilon chains, while a peripheral stalk is formed by the delta and b chains.

The protein resides in the cell membrane. In terms of biological role, f(1)F(0) ATP synthase produces ATP from ADP in the presence of a proton or sodium gradient. F-type ATPases consist of two structural domains, F(1) containing the extramembraneous catalytic core and F(0) containing the membrane proton channel, linked together by a central stalk and a peripheral stalk. During catalysis, ATP synthesis in the catalytic domain of F(1) is coupled via a rotary mechanism of the central stalk subunits to proton translocation. Component of the F(0) channel, it forms part of the peripheral stalk, linking F(1) to F(0). This Clostridium perfringens (strain ATCC 13124 / DSM 756 / JCM 1290 / NCIMB 6125 / NCTC 8237 / Type A) protein is ATP synthase subunit b.